Here is a 317-residue protein sequence, read N- to C-terminus: Pantothenate kinase (317 aa).

95 to 102 (GSVAVGKS) contacts ATP.

This sequence belongs to the prokaryotic pantothenate kinase family.

Its subcellular location is the cytoplasm. It catalyses the reaction (R)-pantothenate + ATP = (R)-4'-phosphopantothenate + ADP + H(+). The protein operates within cofactor biosynthesis; coenzyme A biosynthesis; CoA from (R)-pantothenate: step 1/5. The sequence is that of Pantothenate kinase from Myxococcus xanthus (strain DK1622).